A 59-amino-acid chain; its full sequence is MDEKNPEAVPRPPEQNTELVPPKKSKSKKPANILIYLIDRHLGRPRNDMDLFEWVWTLK.

A disordered region spans residues 1–28 (MDEKNPEAVPRPPEQNTELVPPKKSKSK).

In terms of tissue distribution, specifically expressed in testis.

The polypeptide is Embryonic testis differentiation protein (Mus musculus (Mouse)).